The chain runs to 273 residues: Glutamate racemase (273 aa).

Residues 7-8 (DS) and 39-40 (YG) each bind substrate. The Proton donor/acceptor role is filled by Cys70. 71 to 72 (NT) provides a ligand contact to substrate. Cys194 serves as the catalytic Proton donor/acceptor. 195-196 (TH) lines the substrate pocket.

The protein belongs to the aspartate/glutamate racemases family.

The catalysed reaction is L-glutamate = D-glutamate. It functions in the pathway cell wall biogenesis; peptidoglycan biosynthesis. Provides the (R)-glutamate required for cell wall biosynthesis. This is Glutamate racemase from Dinoroseobacter shibae (strain DSM 16493 / NCIMB 14021 / DFL 12).